The sequence spans 1322 residues: Flocculation protein FLO9 (1322 aa).

An N-terminal signal peptide occupies residues 1–24 (MSLAHYCLLLAIVTLLGLTNVVSA). Residues 74 to 249 (GGQTDISIDY…GTTVSDDFEG (176 aa)) enclose the PA14 domain. 6 N-linked (GlcNAc...) asparagine glycosylation sites follow: Asn-135, Asn-187, Asn-203, Asn-257, Asn-262, and Asn-270. A sugar recognition region spans residues 197-240 (NGSPPDNITGTVYMYAGFYYPMKIVYSNAVAWGTLPISVTLPDG). A run of 13 repeats spans residues 278–322 (TTTE…STII), 323–367 (TTTE…TTAI), 368–412 (TTTE…TTAM), 413–457 (TTTQ…TTAM), 458–502 (TTTQ…TTAM), 503–547 (TTTQ…TTAM), 548–592 (TTTQ…TTAI), 593–637 (TTTE…TTAI), 638–682 (TTTQ…TTAM), 683–727 (TTTQ…TTAM), 728–772 (TTTQ…GLIS), 773–817 (TTTE…GLVT), and 818–862 (TTTE…ISSS). Residues 278–862 (TTTEPWTGTF…KTPTTAISSS (585 aa)) are 13 X 45 AA approximate tandem repeats, Thr-rich. A glycan (N-linked (GlcNAc...) asparagine) is linked at Asn-329. Asn-419, Asn-464, Asn-509, Asn-554, Asn-599, Asn-644, Asn-689, and Asn-734 each carry an N-linked (GlcNAc...) asparagine glycan. Disordered regions lie at residues 770–799 (LIST…NGQP) and 816–843 (VTTT…TNGQ). Low complexity-rich tracts occupy residues 773 to 795 (TTTE…VTGT) and 817 to 840 (TTTT…ITGT). An N-linked (GlcNAc...) asparagine glycan is attached at Asn-888. 3 tandem repeats follow at residues 892-906 (VISS…TSSL), 907-921 (VISS…TSSP), and 922-936 (VISS…ISST). The tract at residues 892 to 936 (VISSSVISSSDTSSLVISSSVTSSLVTSSPVISSSFISSPVISST) is 3 X 15 AA approximate repeats, Ser-rich. Over residues 950-1001 (SVIPTSSSTSGSSESETGSASSASSSSSISSESPKSTYSSSSLPPVTSATTS) the composition is skewed to low complexity. The tract at residues 950-1018 (SVIPTSSSTS…PPVTTTKTSE (69 aa)) is disordered. Residues 1002 to 1018 (QEITSSLPPVTTTKTSE) are compositionally biased toward polar residues. 3 consecutive repeat copies span residues 1013-1063 (TTKT…CPIS), 1085-1135 (TTET…CPIS), and 1136-1186 (TTES…RPQT). The segment at 1013–1186 (TTKTSEQTTL…TVYSTWRPQT (174 aa)) is 3 X 51 AA approximate repeats, Thr-rich. Polar residues predominate over residues 1186-1196 (TTNEQSVSSKM). Disordered stretches follow at residues 1186 to 1221 (TTNE…AAET) and 1256 to 1284 (SETG…ASSM). Residues 1197–1221 (NSATSETTTNTGAAETTTSTGAAET) show a composition bias toward low complexity. Over residues 1257-1284 (ETGNTKSLTSSGLSTMSQQPRSTPASSM) the composition is skewed to polar residues. Gly-1299 carries GPI-anchor amidated glycine lipidation. Residues 1300–1322 (SANSLLAGSGLSVFIASLLLAII) constitute a propeptide, removed in mature form.

This sequence belongs to the flocculin family. Post-translationally, the GPI-anchor is attached to the protein in the endoplasmic reticulum and serves to target the protein to the cell surface. There, the glucosamine-inositol phospholipid moiety is cleaved off and the GPI-modified mannoprotein is covalently attached via its lipidless GPI glycan remnant to the 1,6-beta-glucan of the outer cell wall layer.

Its subcellular location is the secreted. The protein localises to the cell wall. The protein resides in the membrane. Its function is as follows. Cell wall protein that participates directly in adhesive cell-cell interactions during yeast flocculation, a reversible, asexual and Ca(2+)-dependent process in which cells adhere to form aggregates (flocs) consisting of thousands of cells. The lectin-like protein sticks out of the cell wall of flocculent cells and selectively binds mannose residues in the cell walls of adjacent cells. The protein is Flocculation protein FLO9 (FLO9) of Saccharomyces cerevisiae (strain ATCC 204508 / S288c) (Baker's yeast).